The chain runs to 226 residues: Ribonuclease 3 (226 aa).

Positions Leu-7 to Asn-129 constitute an RNase III domain. Residue Glu-42 coordinates Mg(2+). Asp-46 is a catalytic residue. Residues Asp-115 and Glu-118 each coordinate Mg(2+). Glu-118 is a catalytic residue. Positions Asp-156–Lys-226 constitute a DRBM domain.

This sequence belongs to the ribonuclease III family. Homodimer. Mg(2+) is required as a cofactor.

The protein localises to the cytoplasm. The enzyme catalyses Endonucleolytic cleavage to 5'-phosphomonoester.. Functionally, digests double-stranded RNA. Involved in the processing of primary rRNA transcript to yield the immediate precursors to the large and small rRNAs (23S and 16S). Processes some mRNAs, and tRNAs when they are encoded in the rRNA operon. Processes pre-crRNA and tracrRNA of type II CRISPR loci if present in the organism. The sequence is that of Ribonuclease 3 from Shewanella denitrificans (strain OS217 / ATCC BAA-1090 / DSM 15013).